A 434-amino-acid polypeptide reads, in one-letter code: 4-hydroxyphenylpyruvate dioxygenase (434 aa).

The interval 1-21 (MPPTPTTPAATGAAAAVTPEH) is disordered. Residues 7 to 19 (TPAATGAAAAVTP) show a composition bias toward low complexity. 2 consecutive VOC domains span residues 41-192 (SFHH…FLPG) and 208-368 (RFDH…IFTK). Fe cation is bound by residues histidine 211, histidine 293, and glutamate 379.

Belongs to the 4HPPD family. The cofactor is Fe cation.

The protein localises to the cytoplasm. It carries out the reaction 3-(4-hydroxyphenyl)pyruvate + O2 = homogentisate + CO2. It participates in amino-acid degradation; L-phenylalanine degradation; acetoacetate and fumarate from L-phenylalanine: step 3/6. The protein operates within cofactor biosynthesis; prenylquinone biosynthesis. The protein is 4-hydroxyphenylpyruvate dioxygenase of Hordeum vulgare (Barley).